Reading from the N-terminus, the 84-residue chain is Small ribosomal subunit protein eS27-like (84 aa).

The span at 1-16 (MPLARDLLHPSLDEEK) shows a compositional bias: basic and acidic residues. A disordered region spans residues 1–23 (MPLARDLLHPSLDEEKKKHKKKR). Residues 38 to 60 (PGCYKITTVFSHAQTVVLCVGCS) form a C4-type zinc finger.

Belongs to the eukaryotic ribosomal protein eS27 family. It depends on Zn(2+) as a cofactor.

The chain is Small ribosomal subunit protein eS27-like (RPS27L) from Bos taurus (Bovine).